A 321-amino-acid chain; its full sequence is Chitinase-like protein 1 (321 aa).

Residues 1-26 (MVTIRSGSIVILVLLAVSFLALVANG) form the signal peptide. Cysteine 42 and cysteine 55 form a disulfide bridge. The N-linked (GlcNAc...) asparagine glycan is linked to asparagine 57. An intrachain disulfide couples cysteine 157 to cysteine 167. N-linked (GlcNAc...) asparagine glycosylation is found at asparagine 208 and asparagine 244. A disulfide bond links cysteine 267 and cysteine 304. The tract at residues 297–321 (GPNDELSCAEQKPFNPSTVPSSSSS) is disordered. Positions 310–321 (FNPSTVPSSSSS) are enriched in polar residues.

Belongs to the glycosyl hydrolase 19 family. In terms of tissue distribution, mostly expressed in seedlings shoots and roots, stems, and flowers, and, to a lower extent, in flowers, mature leaves and roots.

It is found in the secreted. Functionally, no chitinase activity. Essential for normal plant growth and development. Regulates cell expansion extent and differentiation at least in roots and hypocotyls. Prevents lignin accumulation in the pith. May modulate ethylene-mediated regulation during development. Probably required to establish thermotolerance acclimation. Plays a role for controlled anisotropic cell expansion in the regulation of waving during root gravitropism and thigmotropism. Involved in the root system architecture adaptation to multiple environmental conditions such as nitrate. Contributes to salt tolerance and possibly to drought by preventing the overaccumulation of sodium ions. In Arabidopsis thaliana (Mouse-ear cress), this protein is Chitinase-like protein 1 (CTL1).